The following is a 110-amino-acid chain: Large ribosomal subunit protein uL22 (110 aa).

Belongs to the universal ribosomal protein uL22 family. Part of the 50S ribosomal subunit.

Its function is as follows. This protein binds specifically to 23S rRNA; its binding is stimulated by other ribosomal proteins, e.g. L4, L17, and L20. It is important during the early stages of 50S assembly. It makes multiple contacts with different domains of the 23S rRNA in the assembled 50S subunit and ribosome. Functionally, the globular domain of the protein is located near the polypeptide exit tunnel on the outside of the subunit, while an extended beta-hairpin is found that lines the wall of the exit tunnel in the center of the 70S ribosome. This Pasteurella multocida (strain Pm70) protein is Large ribosomal subunit protein uL22.